The following is a 370-amino-acid chain: Aminomethyltransferase (370 aa).

Belongs to the GcvT family. The glycine cleavage system is composed of four proteins: P, T, L and H.

The catalysed reaction is N(6)-[(R)-S(8)-aminomethyldihydrolipoyl]-L-lysyl-[protein] + (6S)-5,6,7,8-tetrahydrofolate = N(6)-[(R)-dihydrolipoyl]-L-lysyl-[protein] + (6R)-5,10-methylene-5,6,7,8-tetrahydrofolate + NH4(+). In terms of biological role, the glycine cleavage system catalyzes the degradation of glycine. This chain is Aminomethyltransferase, found in Stenotrophomonas maltophilia (strain R551-3).